The chain runs to 231 residues: Large ribosomal subunit protein uL1 (231 aa).

Belongs to the universal ribosomal protein uL1 family. Part of the 50S ribosomal subunit.

Functionally, binds directly to 23S rRNA. The L1 stalk is quite mobile in the ribosome, and is involved in E site tRNA release. Protein L1 is also a translational repressor protein, it controls the translation of the L11 operon by binding to its mRNA. This Azotobacter vinelandii (strain DJ / ATCC BAA-1303) protein is Large ribosomal subunit protein uL1.